The following is a 134-amino-acid chain: Secretin (134 aa).

The signal sequence occupies residues 1–21 (MATRALLLLLLLPPLLLLAGC). The propeptide occupies 22 to 31 (AARPAPPRAP). Valine 59 is modified (valine amide). Position 63 is a phosphoserine (serine 63). The propeptide occupies 63-134 (SQQDPENNTA…PAAEGSPMPP (72 aa)).

This sequence belongs to the glucagon family.

The protein localises to the secreted. Hormone involved in different processes, such as regulation of the pH of the duodenal content, food intake and water homeostasis. Exerts its biological effects by binding to secretin receptor (SCTR), a G-protein coupled receptor expressed in the basolateral domain of several cells. Acts as a key gastrointestinal hormone by regulating the pH of the duodenal content. Secreted by S cells of the duodenum in the crypts of Lieberkuehn and regulates the pH of the duodenum by (1) inhibiting the secretion of gastric acid from the parietal cells of the stomach and (2) stimulating the production of bicarbonate (NaHCO(3)) from the ductal cells of the pancreas. Production of bicarbonate is essential to neutralize the pH and ensure no damage is done to the small intestine by the gastric acid. In addition to regulating the pH of the duodenal content, plays a central role in diet induced thermogenesis: acts as a non-sympathetic brown fat (BAT) activator mediating prandial thermogenesis, which consequentially induces satiation. Mechanistically, secretin released by the gut after a meal binds to secretin receptor (SCTR) in brown adipocytes, activating brown fat thermogenesis by stimulating lipolysis, which is sensed in the brain and promotes satiation. Also able to stimulate lipolysis in white adipocytes. Also plays an important role in cellular osmoregulation: released into the systemic circulation in response to hyperosmolality and acts at different levels in the hypothalamus, pituitary and kidney to regulate water homeostasis. Also plays a role in the central nervous system, possibly by acting as a neuropeptide hormone: required for hippocampal synaptic function and neural progenitor cells maintenance. This chain is Secretin, found in Sus scrofa (Pig).